A 350-amino-acid chain; its full sequence is Anthranilate phosphoribosyltransferase (350 aa).

5-phospho-alpha-D-ribose 1-diphosphate contacts are provided by residues Gly-94, 97-98 (GD), Thr-102, 104-107 (NIST), 122-130 (KHGNRSVSS), and Ser-134. Gly-94 provides a ligand contact to anthranilate. Ser-106 provides a ligand contact to Mg(2+). Asn-125 contributes to the anthranilate binding site. Arg-180 is a binding site for anthranilate. Asp-239 and Glu-240 together coordinate Mg(2+).

Belongs to the anthranilate phosphoribosyltransferase family. In terms of assembly, homodimer. The cofactor is Mg(2+).

The catalysed reaction is N-(5-phospho-beta-D-ribosyl)anthranilate + diphosphate = 5-phospho-alpha-D-ribose 1-diphosphate + anthranilate. It participates in amino-acid biosynthesis; L-tryptophan biosynthesis; L-tryptophan from chorismate: step 2/5. Its function is as follows. Catalyzes the transfer of the phosphoribosyl group of 5-phosphorylribose-1-pyrophosphate (PRPP) to anthranilate to yield N-(5'-phosphoribosyl)-anthranilate (PRA). This is Anthranilate phosphoribosyltransferase from Geotalea daltonii (strain DSM 22248 / JCM 15807 / FRC-32) (Geobacter daltonii).